The primary structure comprises 196 residues: Pantothenic acid transporter PanT (196 aa).

6 helical membrane-spanning segments follow: residues 10–30 (AILAIFIAIMVVVQLFTQFVI), 35–55 (FPVKPTLLHLPVIIGSIILGW), 58–78 (GAFLGLVWGLISFVTATIVTT), 99–119 (WGLFIAFIPRILVGILPYFVY), 131–151 (AAFAGTATNTVLVLTSIFLFF), and 161–181 (YLLGAIVATNSLTEVIIAVIL).

As to quaternary structure, in E.coli forms a stable energy-coupling factor (ECF) transporter complex composed of 2 membrane-embedded substrate-binding protein (S component), 2 ATP-binding proteins (A and A' components) and 2 transmembrane proteins (T component), probably with a stoichiometry of 2:1:1:2. May be able to interact with more than 1 S component at a time.

Its subcellular location is the cell membrane. Probably a pantothenic acid-binding protein that interacts with the energy-coupling factor (ECF) ABC-transporter complex. Unlike classic ABC transporters this ECF transporter provides the energy necessary to transport a number of different substrates. The substrates themselves are bound by transmembrane, not extracytoplasmic soluble proteins. In Lactococcus lactis subsp. cremoris (strain MG1363), this protein is Pantothenic acid transporter PanT (panT).